Consider the following 932-residue polypeptide: Isoleucine--tRNA ligase (932 aa).

Positions 57-67 (PYANGDIHIGT) match the 'HIGH' region motif. Glu559 lines the L-isoleucyl-5'-AMP pocket. Residues 600 to 604 (KMSKS) carry the 'KMSKS' region motif. ATP is bound at residue Lys603. Residues Cys899, Cys902, Cys919, and Cys922 each coordinate Zn(2+).

This sequence belongs to the class-I aminoacyl-tRNA synthetase family. IleS type 1 subfamily. As to quaternary structure, monomer. Requires Zn(2+) as cofactor.

Its subcellular location is the cytoplasm. It catalyses the reaction tRNA(Ile) + L-isoleucine + ATP = L-isoleucyl-tRNA(Ile) + AMP + diphosphate. Functionally, catalyzes the attachment of isoleucine to tRNA(Ile). As IleRS can inadvertently accommodate and process structurally similar amino acids such as valine, to avoid such errors it has two additional distinct tRNA(Ile)-dependent editing activities. One activity is designated as 'pretransfer' editing and involves the hydrolysis of activated Val-AMP. The other activity is designated 'posttransfer' editing and involves deacylation of mischarged Val-tRNA(Ile). This chain is Isoleucine--tRNA ligase, found in Thermoanaerobacter pseudethanolicus (strain ATCC 33223 / 39E) (Clostridium thermohydrosulfuricum).